The primary structure comprises 353 residues: UPF0283 membrane protein YcjF (353 aa).

The next 3 membrane-spanning stretches (helical) occupy residues 70 to 90 (MVMG…VQWT), 100 to 120 (VALG…GSVV), and 213 to 233 (ESTL…FIAW).

This sequence belongs to the UPF0283 family.

Its subcellular location is the cell inner membrane. This chain is UPF0283 membrane protein YcjF, found in Escherichia coli O139:H28 (strain E24377A / ETEC).